Here is a 381-residue protein sequence, read N- to C-terminus: Alkanesulfonate monooxygenase (381 aa).

It belongs to the SsuD family. Homotetramer.

The enzyme catalyses an alkanesulfonate + FMNH2 + O2 = an aldehyde + FMN + sulfite + H2O + 2 H(+). In terms of biological role, catalyzes the desulfonation of aliphatic sulfonates. This chain is Alkanesulfonate monooxygenase, found in Escherichia coli O8 (strain IAI1).